Consider the following 337-residue polypeptide: Anthranilate phosphoribosyltransferase (337 aa).

5-phospho-alpha-D-ribose 1-diphosphate is bound by residues glycine 80, 83-84, threonine 88, 90-93, 108-116, and serine 120; these read GD, NIST, and KHGNRAVSS. Glycine 80 contacts anthranilate. Position 92 (serine 92) interacts with Mg(2+). Position 111 (asparagine 111) interacts with anthranilate. Arginine 166 is an anthranilate binding site. Residues aspartate 224 and glutamate 225 each coordinate Mg(2+).

This sequence belongs to the anthranilate phosphoribosyltransferase family. Homodimer. Requires Mg(2+) as cofactor.

It catalyses the reaction N-(5-phospho-beta-D-ribosyl)anthranilate + diphosphate = 5-phospho-alpha-D-ribose 1-diphosphate + anthranilate. Its pathway is amino-acid biosynthesis; L-tryptophan biosynthesis; L-tryptophan from chorismate: step 2/5. Functionally, catalyzes the transfer of the phosphoribosyl group of 5-phosphorylribose-1-pyrophosphate (PRPP) to anthranilate to yield N-(5'-phosphoribosyl)-anthranilate (PRA). This chain is Anthranilate phosphoribosyltransferase, found in Anaeromyxobacter sp. (strain Fw109-5).